Reading from the N-terminus, the 203-residue chain is GTP-binding protein ypt1 (203 aa).

GTP is bound by residues Gly-15 to Cys-23, Tyr-33 to Thr-40, Asp-63 to Gln-67, Asn-121 to Asp-124, and Ser-151 to Lys-153. The Effector region motif lies at Tyr-37–Phe-45. Residues Asn-180–Cys-203 form a disordered region. S-geranylgeranyl cysteine attachment occurs at residues Cys-202 and Cys-203.

This sequence belongs to the small GTPase superfamily. Rab family.

It localises to the endoplasmic reticulum membrane. The protein localises to the golgi apparatus membrane. The protein resides in the cytoplasm. Its subcellular location is the preautophagosomal structure membrane. With respect to regulation, rab activation is generally mediated by a guanine exchange factor (GEF), while inactivation through hydrolysis of bound GTP is catalyzed by a GTPase activating protein (GAP). In terms of biological role, the small GTPases Rab are key regulators of intracellular membrane trafficking, from the formation of transport vesicles to their fusion with membranes. Rabs cycle between an inactive GDP-bound form and an active GTP-bound form that is able to recruit to membranes different set of downstream effectors directly responsible for vesicle formation, movement, tethering and fusion. Ypt-1 regulates the trafficking of secretory vesicles from the endoplasmic reticulum (ER) to the Golgi. Plays a role in the initial events of the autophagic vacuole development which take place at specialized regions of the endoplasmic reticulum. Also involved in the recycling of membrane proteins. The chain is GTP-binding protein ypt1 (ypt-1) from Neurospora crassa (strain ATCC 24698 / 74-OR23-1A / CBS 708.71 / DSM 1257 / FGSC 987).